Reading from the N-terminus, the 85-residue chain is Large ribosomal subunit protein bL27 (85 aa).

It belongs to the bacterial ribosomal protein bL27 family.

In Variovorax paradoxus (strain S110), this protein is Large ribosomal subunit protein bL27.